We begin with the raw amino-acid sequence, 3411 residues long: Genome polyprotein (3411 aa).

The Cytoplasmic portion of the chain corresponds to 1–104 (MSGRKAQGKT…LSSRKRRSHD (104 aa)). Residues 102-121 (SHDALAVQFLILGMLLMAGG) constitute a propeptide, ER anchor for the capsid protein C, removed in mature form by serine protease NS3. Residues 105 to 125 (ALAVQFLILGMLLMAGGVTLV) traverse the membrane as a helical segment. Over 126-244 (RKNRWLLLNV…GERQLQKIER (119 aa)) the chain is Extracellular. 2 N-linked (GlcNAc...) asparagine; by host glycosylation sites follow: N134 and N150. A helical membrane pass occupies residues 245-265 (WLVRNPFFAVTALTIAYLVGS). Residues 266 to 270 (NMTQR) are Cytoplasmic-facing. Residues 271–285 (VVIALLVLAVGPAYS) traverse the membrane as a helical segment. Residues 286-730 (AHCIGITDRD…TVFGSAFQGL (445 aa)) are Extracellular-facing. Disulfide bonds link C288/C315, C345/C401, C345/C406, C359/C390, C377/C401, C377/C406, C467/C568, and C585/C615. Residues 383–396 (DRGWGNGCGLFGKG) form a fusion peptide region. A helical transmembrane segment spans residues 731 to 751 (FGGLSWITKVIMGAVLIWVGI). Topologically, residues 752–757 (NTRNMT) are extracellular. The chain crosses the membrane as a helical span at residues 758–778 (MSMSMILVGVIMMFLSLGVGA). The Extracellular portion of the chain corresponds to 779–1132 (DQGCAINFGK…LVRSWVTAGE (354 aa)). Disulfide bonds link C782–C793, C833–C921, C957–C1002, C1058–C1107, C1069–C1091, and C1090–C1094. N-linked (GlcNAc...) asparagine; by host glycosylation is found at N908 and N986. The helical transmembrane segment at 1133–1153 (IHAVPFGLVSMMIAMEVVLRK) threads the bilayer. The Cytoplasmic segment spans residues 1154 to 1201 (RQGPKQMLVGGVVLLGAMLVGQVTLLDLLKLTVAVGLHFHEMNNGGDA). The helical transmembrane segment at 1202–1222 (MYMALIAAFSIRPGLLIGFGL) threads the bilayer. The Lumenal portion of the chain corresponds to 1223-1287 (RTLWSPRERL…ILPLMALLTP (65 aa)). The chain crosses the membrane as a helical span at residues 1288–1308 (VTMAEVRLAAMLFCTVVIIGV). The Cytoplasmic segment spans residues 1309–1355 (LHQNSKDTSMQKTIPLVALTLTSYLGLTQPFLGLCAFLATRLFGRRS). Residues 1356–1376 (IPVNEALAAAGLVGVLAGLAF) traverse the membrane as a helical segment. The Lumenal segment spans residues 1377-1378 (QE). Residues 1379–1399 (MENFLGPIAVGGILMMLVSVA) form a helical membrane-spanning segment. At 1400-1456 (GRVDGLELRKLGEVSWEEEAEISGSSARYDVALSEQGEFKLLSEEKVPWDQVVMTSL) the chain is on the cytoplasmic side. Residues 1407–1446 (LRKLGEVSWEEEAEISGSSARYDVALSEQGEFKLLSEEKV) are interacts with and activates NS3 protease. The segment at residues 1457–1477 (ALVGAAIHPFALLLVLAGWLF) is an intramembrane region (helical). At 1478-2157 (HVKGARRSGD…RNALSMMPEA (680 aa)) the chain is on the cytoplasmic side. The Peptidase S7 domain occupies 1485–1665 (SGDVLWDIPT…EVKEEGKEEL (181 aa)). Active-site charge relay system; for serine protease NS3 activity residues include H1537, D1561, and S1622. Positions 1669–1825 (PTMLKKGMTT…HSNGEIEDVQ (157 aa)) constitute a Helicase ATP-binding domain. Residues 1673–1676 (KKGM) are important for RNA-binding. Position 1682–1689 (1682–1689 (FHPGAGKT)) interacts with ATP. The DEAH box motif lies at 1773–1776 (DEAH). The region spanning 1820-1997 (EIEDVQTDIP…VRGGMVAPLY (178 aa)) is the Helicase C-terminal domain. K1877 is subject to N6-acetyllysine; by host. A disordered region spans residues 1942–1961 (AAQRRGRIGRNPNRDGDSYY). The chain crosses the membrane as a helical span at residues 2158–2178 (MTIAMLFILAGLLTSGMVIFF). At 2179–2186 (MSPKGISR) the chain is on the lumenal side. Positions 2187–2207 (MSMAMGTMAGCGYLMFLGGVK) form an intramembrane region, helical. Topologically, residues 2208–2209 (PT) are lumenal. A helical membrane pass occupies residues 2210-2230 (HISYIMLIFFVLMVVVIPEPG). Topologically, residues 2231–2241 (QQRSIQDNQVA) are cytoplasmic. A helical membrane pass occupies residues 2242–2262 (YLIIGILTLVSVVAANELGML). Residues 2263–2293 (EKTKEDLFGKKDLIPSSASPWSWPDLDLKPG) are Lumenal-facing. Residues 2294–2314 (AAWTVYVGIVTMLSPMLHHWI) constitute an intramembrane region (helical). The Lumenal segment spans residues 2315 to 2360 (KVEYGNLSLSGIAQSASVLSFMDKGIPFMKMNISVIILLVSGWNSI). The chain crosses the membrane as a helical span at residues 2361-2380 (TVMPLLCGIGCAMLHWSLIL). Topologically, residues 2381–2421 (PGIKAQQSKLAQRRVFHGVAKNPVVDGNPTVDIEEAPEMPA) are cytoplasmic. The chain crosses the membrane as a helical span at residues 2422-2442 (LYEKKLALYLLLALSLASVAM). The Lumenal segment spans residues 2443–2445 (CRT). A helical transmembrane segment spans residues 2446-2466 (PFSLAEGIVLASAALGPLIEG). The Cytoplasmic segment spans residues 2467-3411 (NTSLLWNGPM…DADLQPGELI (945 aa)). In terms of domain architecture, mRNA cap 0-1 NS5-type MT spans 2507 to 2771 (GRANGKTLGE…DVILPIGTRS (265 aa)). S2562 is an S-adenosyl-L-methionine binding site. Position 2562 is a phosphoserine (S2562). The active-site For 2'-O-MTase activity is K2567. S-adenosyl-L-methionine-binding residues include G2592, W2593, T2610, L2611, D2637, and I2638. Catalysis depends on D2652, which acts as the For 2'-O-MTase activity. I2653 serves as a coordination point for S-adenosyl-L-methionine. Catalysis depends on for 2'-O-MTase activity residues K2688 and E2724. Y2726 lines the S-adenosyl-L-methionine pocket. The Nuclear localization signal signature appears at 2878 to 2911 (RKIMKVVNRWLFRHLAREKNPRLCTKEEFIAKVR). Zn(2+) is bound by residues E2945, H2949, C2954, and C2957. A RdRp catalytic domain is found at 3035-3187 (GGFYADDTAG…RPIDDRFGLA (153 aa)). H3222, C3238, and C3357 together coordinate Zn(2+).

This sequence in the N-terminal section; belongs to the class I-like SAM-binding methyltransferase superfamily. mRNA cap 0-1 NS5-type methyltransferase family. Homodimer. Interacts (via N-terminus) with host EXOC1 (via C-terminus); this interaction results in EXOC1 degradation through the proteasome degradation pathway. As to quaternary structure, forms heterodimers with envelope protein E in the endoplasmic reticulum and Golgi. In terms of assembly, homodimer; in the endoplasmic reticulum and Golgi. Interacts with protein prM. Interacts with non-structural protein 1. Homodimer; Homohexamer when secreted. Interacts with envelope protein E. As to quaternary structure, interacts (via N-terminus) with serine protease NS3. In terms of assembly, forms a heterodimer with serine protease NS3. May form homooligomers. Forms a heterodimer with NS2B. Interacts with non-structural protein 2A (via N-terminus). Interacts with NS4B. Interacts with unphosphorylated RNA-directed RNA polymerase NS5; this interaction stimulates RNA-directed RNA polymerase NS5 guanylyltransferase activity. NS3 interacts with host PDCD6IP; this interaction contributes to virion release. As to quaternary structure, interacts with serine protease NS3. In terms of assembly, homodimer. Interacts with host STAT2; this interaction prevents the establishment of cellular antiviral state. Interacts with serine protease NS3. Interacts with host TRIM23; this interaction leads to NS5 ubiquitination. In terms of processing, specific enzymatic cleavages in vivo yield mature proteins. The nascent capsid protein C contains a C-terminal hydrophobic domain that act as a signal sequence for translocation of prM into the lumen of the ER. Mature capsid protein C is cleaved at a site upstream of this hydrophobic domain by NS3. prM is cleaved in post-Golgi vesicles by a host furin, releasing the mature small envelope protein M, and peptide pr. Non-structural protein 2A-alpha, a C-terminally truncated form of non-structural protein 2A, results from partial cleavage by NS3. Specific enzymatic cleavages in vivo yield mature proteins peptide 2K acts as a signal sequence and is removed from the N-terminus of NS4B by the host signal peptidase in the ER lumen. Signal cleavage at the 2K-4B site requires a prior NS3 protease-mediated cleavage at the 4A-2K site. Post-translationally, cleaved in post-Golgi vesicles by a host furin, releasing the mature small envelope protein M, and peptide pr. This cleavage is incomplete as up to 30% of viral particles still carry uncleaved prM. N-glycosylated. In terms of processing, N-glycosylated. The excreted form is glycosylated and this is required for efficient secretion of the protein from infected cells. Post-translationally, polyubiquitinated; ubiquitination is probably mediated by host TRIM23 and is prerequisite for NS5-STAT2 interaction. NS5 is not ISGylated or sumoylated. Acetylated by host KAT5. Acetylation modulates NS3 RNA-binding and unwinding activities and plays an important positive role for viral replication. In terms of processing, phosphorylated on serines residues. This phosphorylation may trigger NS5 nuclear localization.

It is found in the virion. The protein localises to the host nucleus. Its subcellular location is the host cytoplasm. It localises to the host perinuclear region. The protein resides in the secreted. It is found in the virion membrane. The protein localises to the host endoplasmic reticulum membrane. It carries out the reaction Selective hydrolysis of -Xaa-Xaa-|-Yaa- bonds in which each of the Xaa can be either Arg or Lys and Yaa can be either Ser or Ala.. The catalysed reaction is RNA(n) + a ribonucleoside 5'-triphosphate = RNA(n+1) + diphosphate. It catalyses the reaction a ribonucleoside 5'-triphosphate + H2O = a ribonucleoside 5'-diphosphate + phosphate + H(+). The enzyme catalyses ATP + H2O = ADP + phosphate + H(+). It carries out the reaction a 5'-end (5'-triphosphoguanosine)-ribonucleoside in mRNA + S-adenosyl-L-methionine = a 5'-end (N(7)-methyl 5'-triphosphoguanosine)-ribonucleoside in mRNA + S-adenosyl-L-homocysteine. The catalysed reaction is a 5'-end (N(7)-methyl 5'-triphosphoguanosine)-ribonucleoside in mRNA + S-adenosyl-L-methionine = a 5'-end (N(7)-methyl 5'-triphosphoguanosine)-(2'-O-methyl-ribonucleoside) in mRNA + S-adenosyl-L-homocysteine + H(+). Its function is as follows. Plays a role in virus budding by binding to the cell membrane and gathering the viral RNA into a nucleocapsid that forms the core of a mature virus particle. During virus entry, may induce genome penetration into the host cytoplasm after hemifusion induced by the surface proteins. Can migrate to the cell nucleus where it modulates host functions. In terms of biological role, inhibits RNA silencing by interfering with host Dicer. Prevents premature fusion activity of envelope proteins in trans-Golgi by binding to envelope protein E at pH6.0. After virion release in extracellular space, gets dissociated from E dimers. Functionally, acts as a chaperone for envelope protein E during intracellular virion assembly by masking and inactivating envelope protein E fusion peptide. prM is the only viral peptide matured by host furin in the trans-Golgi network probably to avoid catastrophic activation of the viral fusion activity in acidic Golgi compartment prior to virion release. prM-E cleavage is inefficient, and many virions are only partially matured. These uncleaved prM would play a role in immune evasion. Its function is as follows. May play a role in virus budding. Exerts cytotoxic effects by activating a mitochondrial apoptotic pathway through M ectodomain. May display a viroporin activity. In terms of biological role, binds to host cell surface receptor and mediates fusion between viral and cellular membranes. Envelope protein is synthesized in the endoplasmic reticulum in the form of heterodimer with protein prM. They play a role in virion budding in the ER, and the newly formed immature particle is covered with 60 spikes composed of heterodimer between precursor prM and envelope protein E. The virion is transported to the Golgi apparatus where the low pH causes dissociation of PrM-E heterodimers and formation of E homodimers. prM-E cleavage is inefficient, and many virions are only partially matured. These uncleaved prM would play a role in immune evasion. Involved in immune evasion, pathogenesis and viral replication. Once cleaved off the polyprotein, is targeted to three destinations: the viral replication cycle, the plasma membrane and the extracellular compartment. Essential for viral replication. Required for formation of the replication complex and recruitment of other non-structural proteins to the ER-derived membrane structures. Excreted as a hexameric lipoparticle that plays a role against host immune response. Antagonizing the complement function. Binds to the host macrophages and dendritic cells. Inhibits signal transduction originating from Toll-like receptor 3 (TLR3). Functionally, component of the viral RNA replication complex that functions in virion assembly and antagonizes the host immune response. Its function is as follows. Required cofactor for the serine protease function of NS3. May have membrane-destabilizing activity and form viroporins. In terms of biological role, displays three enzymatic activities: serine protease, NTPase and RNA helicase. NS3 serine protease, in association with NS2B, performs its autocleavage and cleaves the polyprotein at dibasic sites in the cytoplasm: C-prM, NS2A-NS2B, NS2B-NS3, NS3-NS4A, NS4A-2K and NS4B-NS5. NS3 RNA helicase binds RNA and unwinds dsRNA in the 3' to 5' direction. Also plays a role in virus assembly. Regulates the ATPase activity of the NS3 helicase activity. NS4A allows NS3 helicase to conserve energy during unwinding. Functionally, functions as a signal peptide for NS4B and is required for the interferon antagonism activity of the latter. Its function is as follows. Induces the formation of ER-derived membrane vesicles where the viral replication takes place. Inhibits interferon (IFN)-induced host STAT1 phosphorylation and nuclear translocation, thereby preventing the establishment of cellular antiviral state by blocking the IFN-alpha/beta pathway. In terms of biological role, replicates the viral (+) and (-) RNA genome, and performs the capping of genomes in the cytoplasm. NS5 methylates viral RNA cap at guanine N-7 and ribose 2'-O positions. Besides its role in RNA genome replication, also prevents the establishment of cellular antiviral state by blocking the interferon-alpha/beta (IFN-alpha/beta) signaling pathway. IFN-I induces binding of NS5 to host IFN-activated transcription factor STAT2, preventing its transcriptional activity. Host TRIM23 is the E3 ligase that interacts with and polyubiquitinates NS5 to promote its binding to STAT2 and trigger IFN-I signaling inhibition. This Yellow fever virus (isolate Ivory Coast/1999) (YFV) protein is Genome polyprotein.